A 347-amino-acid polypeptide reads, in one-letter code: Heat-inducible transcription repressor HrcA (347 aa).

This sequence belongs to the HrcA family.

Functionally, negative regulator of class I heat shock genes (grpE-dnaK-dnaJ and groELS operons). Prevents heat-shock induction of these operons. The polypeptide is Heat-inducible transcription repressor HrcA (Desulforamulus reducens (strain ATCC BAA-1160 / DSM 100696 / MI-1) (Desulfotomaculum reducens)).